The following is a 41-amino-acid chain: Large ribosomal subunit protein bL36 (41 aa).

This sequence belongs to the bacterial ribosomal protein bL36 family.

The protein is Large ribosomal subunit protein bL36 of Nitrobacter hamburgensis (strain DSM 10229 / NCIMB 13809 / X14).